Here is a 219-residue protein sequence, read N- to C-terminus: Auxin-responsive protein IAA24 (219 aa).

Positions 24 to 28 (LCLRL) match the EAR-like (transcriptional repression) motif. 2 disordered regions span residues 24–88 (LCLR…AKAQ) and 109–128 (AAAA…QQGG). Polar residues predominate over residues 60-71 (STDSMASGTGTS). Residues 129-215 (GLYVKVSMDG…SCKKLRIMKG (87 aa)) enclose the PB1 domain.

Belongs to the Aux/IAA family. As to quaternary structure, homodimers and heterodimers. As to expression, highly expressed in flowers. Expressed in seedlings.

It is found in the nucleus. In terms of biological role, aux/IAA proteins are short-lived transcriptional factors that function as repressors of early auxin response genes at low auxin concentrations. This Oryza sativa subsp. japonica (Rice) protein is Auxin-responsive protein IAA24 (IAA24).